The following is a 173-amino-acid chain: NADH-ubiquinone oxidoreductase chain 6 (173 aa).

5 helical membrane passes run 1–21 (MTYF…AVAS), 27–47 (YGVV…MSLG), 48–68 (MSFV…VVFV), 87–107 (VVGY…VGGL), and 139–159 (CGVG…FVVL).

This sequence belongs to the complex I subunit 6 family.

The protein resides in the mitochondrion membrane. The catalysed reaction is a ubiquinone + NADH + 5 H(+)(in) = a ubiquinol + NAD(+) + 4 H(+)(out). In terms of biological role, core subunit of the mitochondrial membrane respiratory chain NADH dehydrogenase (Complex I) that is believed to belong to the minimal assembly required for catalysis. Complex I functions in the transfer of electrons from NADH to the respiratory chain. The immediate electron acceptor for the enzyme is believed to be ubiquinone. This Synthliboramphus antiquus (Ancient murrelet) protein is NADH-ubiquinone oxidoreductase chain 6 (MT-ND6).